We begin with the raw amino-acid sequence, 210 residues long: MIHDLMLRWVVTGLFVLTAAECGLAIIAKRRPWTLIVNHGLHFAMAVAMAVMAWPWGARVPTTGPAVFFLLAAVWFGATAVVAVRGTATRGLYGYHGLMMLATAWMYAAMNPRLLPVRSCTEYATEPDGSMPAMDMTAMNMPPNSGSPIWFSAVNWIGTVGFAVAAVFWACRFVMERRQEATQSRLPGSIGQAMMAAGMAMLFFAMLFPV.

6 consecutive transmembrane segments (helical) span residues 9 to 29 (WVVT…IIAK), 35 to 55 (LIVN…MAWP), 64 to 84 (GPAV…VVAV), 91 to 111 (GLYG…AAMN), 149 to 169 (IWFS…AVFW), and 190 to 210 (IGQA…LFPV).

It is found in the cell membrane. This is an uncharacterized protein from Mycobacterium bovis (strain ATCC BAA-935 / AF2122/97).